Here is a 285-residue protein sequence, read N- to C-terminus: Pantothenate synthetase (285 aa).

Position 30-37 (30-37) interacts with ATP; the sequence is MGFLHEGH. His-37 functions as the Proton donor in the catalytic mechanism. A (R)-pantoate-binding site is contributed by Gln-61. Gln-61 provides a ligand contact to beta-alanine. ATP is bound at residue 147 to 150; it reads GQKD. (R)-pantoate is bound at residue Gln-153. Residues Val-176 and 184-187 each bind ATP; that span reads KSSR.

The protein belongs to the pantothenate synthetase family. In terms of assembly, homodimer.

The protein localises to the cytoplasm. It carries out the reaction (R)-pantoate + beta-alanine + ATP = (R)-pantothenate + AMP + diphosphate + H(+). It functions in the pathway cofactor biosynthesis; (R)-pantothenate biosynthesis; (R)-pantothenate from (R)-pantoate and beta-alanine: step 1/1. Functionally, catalyzes the condensation of pantoate with beta-alanine in an ATP-dependent reaction via a pantoyl-adenylate intermediate. This is Pantothenate synthetase from Listeria monocytogenes serotype 4b (strain F2365).